The primary structure comprises 805 residues: Sucrose synthase (805 aa).

A GT-B glycosyltransferase region spans residues 275-752; sequence MVFNVVILSP…GLKRIEEKYT (478 aa).

This sequence belongs to the glycosyltransferase 1 family. Plant sucrose synthase subfamily. As to expression, expression is at least 10-fold higher in tubers compared to photosynthetically active tissues.

It carries out the reaction an NDP-alpha-D-glucose + D-fructose = a ribonucleoside 5'-diphosphate + sucrose + H(+). In terms of biological role, sucrose-cleaving enzyme that provides UDP-glucose and fructose for various metabolic pathways. In Solanum tuberosum (Potato), this protein is Sucrose synthase.